A 249-amino-acid polypeptide reads, in one-letter code: Enolase-phosphatase E1 (249 aa).

Mg(2+) is bound by residues D15 and E17. Residues 146–147 (SS) and K180 contribute to the substrate site. Residue D205 participates in Mg(2+) binding.

It belongs to the HAD-like hydrolase superfamily. MasA/MtnC family. Monomer. Requires Mg(2+) as cofactor.

Its subcellular location is the cytoplasm. It localises to the nucleus. It carries out the reaction 5-methylsulfanyl-2,3-dioxopentyl phosphate + H2O = 1,2-dihydroxy-5-(methylsulfanyl)pent-1-en-3-one + phosphate. The protein operates within amino-acid biosynthesis; L-methionine biosynthesis via salvage pathway; L-methionine from S-methyl-5-thio-alpha-D-ribose 1-phosphate: step 3/6. Its pathway is amino-acid biosynthesis; L-methionine biosynthesis via salvage pathway; L-methionine from S-methyl-5-thio-alpha-D-ribose 1-phosphate: step 4/6. Functionally, bifunctional enzyme that catalyzes the enolization of 2,3-diketo-5-methylthiopentyl-1-phosphate (DK-MTP-1-P) into the intermediate 2-hydroxy-3-keto-5-methylthiopentenyl-1-phosphate (HK-MTPenyl-1-P), which is then dephosphorylated to form the acireductone 1,2-dihydroxy-3-keto-5-methylthiopentene (DHK-MTPene). The polypeptide is Enolase-phosphatase E1 (Caenorhabditis briggsae).